The following is a 348-amino-acid chain: Probable dual-specificity RNA methyltransferase RlmN (348 aa).

Glutamate 93 (proton acceptor) is an active-site residue. A Radical SAM core domain is found at 99 to 333 (TEKRLTACLS…VSLRKSRGLD (235 aa)). An intrachain disulfide couples cysteine 106 to cysteine 338. The [4Fe-4S] cluster site is built by cysteine 113, cysteine 117, and cysteine 120. Residues 160–161 (GE), serine 190, 219–221 (SLH), and asparagine 295 contribute to the S-adenosyl-L-methionine site. Cysteine 338 acts as the S-methylcysteine intermediate in catalysis.

It belongs to the radical SAM superfamily. RlmN family. It depends on [4Fe-4S] cluster as a cofactor.

It is found in the cytoplasm. The catalysed reaction is adenosine(2503) in 23S rRNA + 2 reduced [2Fe-2S]-[ferredoxin] + 2 S-adenosyl-L-methionine = 2-methyladenosine(2503) in 23S rRNA + 5'-deoxyadenosine + L-methionine + 2 oxidized [2Fe-2S]-[ferredoxin] + S-adenosyl-L-homocysteine. The enzyme catalyses adenosine(37) in tRNA + 2 reduced [2Fe-2S]-[ferredoxin] + 2 S-adenosyl-L-methionine = 2-methyladenosine(37) in tRNA + 5'-deoxyadenosine + L-methionine + 2 oxidized [2Fe-2S]-[ferredoxin] + S-adenosyl-L-homocysteine. Specifically methylates position 2 of adenine 2503 in 23S rRNA and position 2 of adenine 37 in tRNAs. The chain is Probable dual-specificity RNA methyltransferase RlmN from Prochlorococcus marinus (strain AS9601).